The sequence spans 134 residues: Ribonuclease VapC11 (134 aa).

A PINc domain is found at 2-126 (ILIDTSAWVE…ADFDVIARIT (125 aa)). The Mg(2+) site is built by Asp-5 and Asp-98.

This sequence belongs to the PINc/VapC protein family. Requires Mg(2+) as cofactor.

Toxic component of a type II toxin-antitoxin (TA) system. Acts as an RNase. Its toxic effects on cell growth and colony formation are neutralized by coexpression with cognate antitoxin VapB11. The sequence is that of Ribonuclease VapC11 from Mycobacterium tuberculosis (strain CDC 1551 / Oshkosh).